The chain runs to 682 residues: Protein asunder (682 aa).

Residues 517–570 (NGARLKLSKAKDQYRLLYRELEQLIHLNATTVHHKNLLESLQSLRAAYGEAKSE) are a coiled coil. A compositionally biased stretch (polar residues) spans 571–583 (PNSSLLRSYTESP). Residues 571 to 612 (PNSSLLRSYTESPHSPERLEPIPSGGSSGSNSNSLLKASKRR) form a disordered region. The short motif at 606–612 (LKASKRR) is the Nuclear localization signal (NLS) element.

It belongs to the Integrator subunit 13 family. Belongs to the multiprotein complex Integrator, at least composed of IntS1, IntS2, IntS3, IntS4, omd/IntS5, IntS6, defl/IntS7, IntS8, IntS9, IntS10, IntS11, IntS12, asun/IntS13, IntS14 and IntS15. The core complex associates with protein phosphatase 2A subunits mts/PP2A and Pp2A-29B, to form the Integrator-PP2A (INTAC) complex. Post-translationally, phosphorylated.

Its subcellular location is the nucleus. It is found in the cytoplasm. The protein resides in the perinuclear region. Functionally, component of the integrator complex, a multiprotein complex that terminates RNA polymerase II (Pol II) transcription in the promoter-proximal region of genes. The integrator complex provides a quality checkpoint during transcription elongation by driving premature transcription termination of transcripts that are unfavorably configured for transcriptional elongation: the complex terminates transcription by (1) catalyzing dephosphorylation of the C-terminal domain (CTD) of Pol II subunit Polr2A/Rbp1 and Spt5, and (2) degrading the exiting nascent RNA transcript via endonuclease activity. The integrator complex is also involved in the 3'-end processing of the U7 snRNA, and also the spliceosomal snRNAs U1, U2, U4 and U5. The polypeptide is Protein asunder (asun) (Drosophila ananassae (Fruit fly)).